A 731-amino-acid chain; its full sequence is 1,4-alpha-glucan branching enzyme GlgB 2 (731 aa).

D410 (nucleophile) is an active-site residue. E463 serves as the catalytic Proton donor.

Belongs to the glycosyl hydrolase 13 family. GlgB subfamily. As to quaternary structure, monomer.

The enzyme catalyses Transfers a segment of a (1-&gt;4)-alpha-D-glucan chain to a primary hydroxy group in a similar glucan chain.. It functions in the pathway glycan biosynthesis; glycogen biosynthesis. Its function is as follows. Catalyzes the formation of the alpha-1,6-glucosidic linkages in glycogen by scission of a 1,4-alpha-linked oligosaccharide from growing alpha-1,4-glucan chains and the subsequent attachment of the oligosaccharide to the alpha-1,6 position. This chain is 1,4-alpha-glucan branching enzyme GlgB 2, found in Xanthomonas oryzae pv. oryzae (strain MAFF 311018).